A 505-amino-acid chain; its full sequence is 2,3-bisphosphoglycerate-independent phosphoglycerate mutase (505 aa).

2 residues coordinate Mn(2+): aspartate 13 and serine 63. The Phosphoserine intermediate role is filled by serine 63. Substrate is bound by residues histidine 124, 153 to 154 (RD), arginine 183, arginine 189, 254 to 257 (RADR), and lysine 330. Mn(2+)-binding residues include aspartate 396, histidine 400, aspartate 437, histidine 438, and histidine 456.

It belongs to the BPG-independent phosphoglycerate mutase family. Monomer. Requires Mn(2+) as cofactor.

It carries out the reaction (2R)-2-phosphoglycerate = (2R)-3-phosphoglycerate. It functions in the pathway carbohydrate degradation; glycolysis; pyruvate from D-glyceraldehyde 3-phosphate: step 3/5. In terms of biological role, catalyzes the interconversion of 2-phosphoglycerate and 3-phosphoglycerate. The protein is 2,3-bisphosphoglycerate-independent phosphoglycerate mutase of Dinoroseobacter shibae (strain DSM 16493 / NCIMB 14021 / DFL 12).